A 692-amino-acid chain; its full sequence is Elongation factor G (692 aa).

Residues 8 to 282 (ENTRNIGIMA…GVVDYLPSPV (275 aa)) enclose the tr-type G domain. GTP contacts are provided by residues 17–24 (AHIDAGKT), 81–85 (DTPGH), and 135–138 (NKMD).

It belongs to the TRAFAC class translation factor GTPase superfamily. Classic translation factor GTPase family. EF-G/EF-2 subfamily.

It localises to the cytoplasm. Catalyzes the GTP-dependent ribosomal translocation step during translation elongation. During this step, the ribosome changes from the pre-translocational (PRE) to the post-translocational (POST) state as the newly formed A-site-bound peptidyl-tRNA and P-site-bound deacylated tRNA move to the P and E sites, respectively. Catalyzes the coordinated movement of the two tRNA molecules, the mRNA and conformational changes in the ribosome. This Anoxybacillus flavithermus (strain DSM 21510 / WK1) protein is Elongation factor G.